The sequence spans 193 residues: Potassium-transporting ATPase KdpC subunit (193 aa).

The chain crosses the membrane as a helical span at residues 7 to 27; that stretch reads PLVVLFVILTAVTGLAYPAVM.

The protein belongs to the KdpC family. In terms of assembly, the system is composed of three essential subunits: KdpA, KdpB and KdpC.

Its subcellular location is the cell inner membrane. Its function is as follows. Part of the high-affinity ATP-driven potassium transport (or Kdp) system, which catalyzes the hydrolysis of ATP coupled with the electrogenic transport of potassium into the cytoplasm. This subunit acts as a catalytic chaperone that increases the ATP-binding affinity of the ATP-hydrolyzing subunit KdpB by the formation of a transient KdpB/KdpC/ATP ternary complex. The chain is Potassium-transporting ATPase KdpC subunit from Burkholderia cenocepacia (strain ATCC BAA-245 / DSM 16553 / LMG 16656 / NCTC 13227 / J2315 / CF5610) (Burkholderia cepacia (strain J2315)).